Here is an 83-residue protein sequence, read N- to C-terminus: Small ribosomal subunit protein bS20 (83 aa).

Residues 60–83 are disordered; sequence ASKGLIHKNKASRDKSRLAAKLAN.

This sequence belongs to the bacterial ribosomal protein bS20 family.

Functionally, binds directly to 16S ribosomal RNA. This Streptococcus thermophilus (strain CNRZ 1066) protein is Small ribosomal subunit protein bS20.